Here is a 133-residue protein sequence, read N- to C-terminus: Salivary cystatin-L2 (133 aa).

The first 18 residues, 1 to 18 (MTSSLALVLLLGGAAVCA), serve as a signal peptide directing secretion. Residues 34-118 (DDPKYLELAH…RTCTAVIYEN (85 aa)) enclose the Cystatin domain.

This sequence belongs to the cystatin family. As to expression, salivary gland, midgut and other tissues.

The protein resides in the secreted. Inhibitor of cysteine proteinases. Inhibits host cathepsin L (CTSL) and S (CTSS). Modulates production of various cytokines and chemokines in lipopolysaccharide (LPS)-stimulated mouse dendritic cell. Suppresses maturation of mouse bone-marrow-derived dendritic cells (BMDCs). In terms of biological role, (Microbial infection) Modulates Borrelia miyamotoi-stimulated immune responses in mice by suppressing activities of host dendritic and T-cells. The chain is Salivary cystatin-L2 from Ixodes persulcatus (Taiga tick).